The following is a 72-amino-acid chain: Defensin-like protein 230 (72 aa).

Positions 1-27 (MEKKSLACLSFLLLVLFVAQEIVVSEA) are cleaved as a signal peptide. Cystine bridges form between Cys-30/Cys-72, Cys-41/Cys-60, Cys-45/Cys-66, and Cys-49/Cys-68.

Belongs to the DEFL family.

The protein resides in the secreted. The chain is Defensin-like protein 230 (PI230) from Pisum sativum (Garden pea).